Reading from the N-terminus, the 550-residue chain is Acidic amino acid decarboxylase GADL1 (550 aa).

Lys362 is modified (N6-(pyridoxal phosphate)lysine).

Belongs to the group II decarboxylase family. In terms of assembly, homodimer. Pyridoxal 5'-phosphate serves as cofactor. As to expression, expressed in skeletal muscles and kidney (at protein level). Expressed in skeletal muscle and weakly in brain. Not expressed in liver or kidney. Expressed in brain, olfactory bulb, liver, muscle and kidney with the highest expression in olfactory bulb and almost not detected in liver (at protein level).

It carries out the reaction L-aspartate + H(+) = beta-alanine + CO2. It catalyses the reaction 3-sulfino-L-alanine + H(+) = hypotaurine + CO2. The enzyme catalyses L-cysteate + H(+) = taurine + CO2. Activated weakly by 0.2-0.4 mM Li(+). Inhibited by bis-carboxymethyl-trithiocarbonate, ethylxanthogenacetic acid and 2,5-disulfoaniline. Catalyzes the decarboxylation of L-aspartate, 3-sulfino-L-alanine (cysteine sulfinic acid), and L-cysteate to beta-alanine, hypotaurine and taurine, respectively. The preferred substrate is L-aspartate. Does not exhibit any decarboxylation activity toward glutamate. This chain is Acidic amino acid decarboxylase GADL1, found in Mus musculus (Mouse).